The chain runs to 58 residues: Mu-diguetoxin-Dc1b (58 aa).

4 disulfide bridges follow: C12-C26, C20-C40, C25-C54, and C42-C52.

Belongs to the neurotoxin 26 (DTX) family. Expressed by the venom gland.

Its subcellular location is the secreted. Acts by delaying the inactivation of presynaptic voltage-sensitive sodium channels (Nav). Acts against insects and cause a progressive spastic paralysis. This is Mu-diguetoxin-Dc1b from Diguetia canities (Desert bush spider).